A 56-amino-acid chain; its full sequence is Metallothionein (56 aa).

Zn(2+) contacts are provided by Cys9, Cys11, Cys14, Cys16, Cys32, Cys36, His40, Cys47, His49, Cys52, and Cys54.

Belongs to the metallothionein superfamily. Type 14 family.

Its function is as follows. May play a role in essential metal ion homeostasis (especially zinc homeostasis) and resistance to certain non-essential metal ions. Binds four zinc ions. The sequence is that of Metallothionein (smtA) from Synechococcus elongatus (strain ATCC 33912 / PCC 7942 / FACHB-805) (Anacystis nidulans R2).